Here is a 215-residue protein sequence, read N- to C-terminus: Sodium channel regulatory subunit beta-2 (215 aa).

A signal peptide spans 1-29; it reads MHRDAWLPRPAFSLTGLSLFFSLVPPGRS. Over 30–157 the chain is Extracellular; that stretch reads MEVTAPTTLS…LEVPPERDST (128 aa). One can recognise an Ig-like C2-type domain in the interval 32–154; the sequence is VTAPTTLSVL…QVLLEVPPER (123 aa). N-linked (GlcNAc...) asparagine glycosylation is found at Asn42, Asn66, and Asn74. 2 disulfide bridges follow: Cys50/Cys127 and Cys72/Cys75. The chain crosses the membrane as a helical span at residues 158-179; it reads VAVIVGASVGGFLAVVILVLMV. Over 180–215 the chain is Cytoplasmic; the sequence is VKCVRRKKEQKLSTDDLKTEEEGKMDGEGNAEDGTK. A disordered region spans residues 188–215; the sequence is EQKLSTDDLKTEEEGKMDGEGNAEDGTK. Positions 189–215 are enriched in basic and acidic residues; the sequence is QKLSTDDLKTEEEGKMDGEGNAEDGTK. Ser192 is modified (phosphoserine).

The protein belongs to the sodium channel auxiliary subunit SCN2B (TC 8.A.17) family. As to quaternary structure, a voltage-gated sodium (Nav) channel consists of an ion-conducting pore-forming alpha subunit functional on its own that is regulated by one or more beta subunits. The beta subunit SCN2B is disulfide-linked to the pore-forming alpha subunit. Interacts with SCN1A; regulatory subunit of SCN1A/Nav1.1. Interacts with SCN2A; regulatory subunit of SCN2A/Nav1.2. Interacts with SCN3A; regulatory subunit of SCN3A/Nav1.3. Interacts with SCN5A; regulatory subunit of SCN5A/Nav1.5. Interacts with SCN8A; regulatory subunit of SCN8A/Nav1.6. Interacts with SCN9A; regulatory subunit of SCN9A/Nav1.7. Interacts with SCN10A; regulatory subunit of SCN10A/Nav1.8. Interacts with TNR; may play a crucial role in clustering and regulation of activity of SCN2B-containing Nav channels at nodes of Ranvier.

It is found in the cell membrane. It localises to the cell projection. The protein localises to the axon. Its function is as follows. Regulatory subunit of multiple voltage-gated sodium (Nav) channels directly mediating the depolarization of excitable membranes. Navs, also called VGSCs (voltage-gated sodium channels) or VDSCs (voltage-dependent sodium channels), operate by switching between closed and open conformations depending on the voltage difference across the membrane. In the open conformation they allow Na(+) ions to selectively pass through the pore, along their electrochemical gradient. The influx of Na+ ions provokes membrane depolarization, initiating the propagation of electrical signals throughout cells and tissues. The accessory beta subunits participate in localization and functional modulation of the Nav channels. Modulates the activity of SCN1A/Nav1.1, SCN2A/Nav1.2, SCN2A/Nav1.3, SCN5A/Nav1.5, SCN8A/Nav1.6, SCN9A/Nav1.7 and SCN10A/Nav1.8. This Mus musculus (Mouse) protein is Sodium channel regulatory subunit beta-2.